Consider the following 250-residue polypeptide: MSGHSKWATTKHKKAIIDARRGKNFAKLIKNIEVAARTGGGDPGGNPTLYDAIQKAKKSSVPNDNIERARKRGAGEEAGGADWQTITYEGYGPNGVAVLIECLTDNRNRAAGEVRVAMTRNGGNMADPGSVSYLFSRKGVITLEKNGLSEDDVLMAVLEAGAEEVTDLGDSFEIISEPTDLVAVRTALQDAGIDYDSADASFQPSVTVPLDAEGARKVMKLVDALEDSDDVQDVYTNADIPDEILAQLEE.

This sequence belongs to the TACO1 family.

It localises to the cytoplasm. This is Probable transcriptional regulatory protein Mkms_2298 from Mycobacterium sp. (strain KMS).